The primary structure comprises 305 residues: Sulfate adenylyltransferase subunit 2 1 (305 aa).

The disordered stretch occupies residues 283 to 305 (RSGRAIDHDQAGSMERKKREGYF).

It belongs to the PAPS reductase family. CysD subfamily. Heterodimer composed of CysD, the smaller subunit, and CysN.

The enzyme catalyses sulfate + ATP + H(+) = adenosine 5'-phosphosulfate + diphosphate. Its pathway is sulfur metabolism; hydrogen sulfide biosynthesis; sulfite from sulfate: step 1/3. With CysN forms the ATP sulfurylase (ATPS) that catalyzes the adenylation of sulfate producing adenosine 5'-phosphosulfate (APS) and diphosphate, the first enzymatic step in sulfur assimilation pathway. APS synthesis involves the formation of a high-energy phosphoric-sulfuric acid anhydride bond driven by GTP hydrolysis by CysN coupled to ATP hydrolysis by CysD. In Chromohalobacter salexigens (strain ATCC BAA-138 / DSM 3043 / CIP 106854 / NCIMB 13768 / 1H11), this protein is Sulfate adenylyltransferase subunit 2 1.